We begin with the raw amino-acid sequence, 362 residues long: Innexin-17 (362 aa).

Helical transmembrane passes span 27-47, 101-121, 189-209, and 266-286; these read YFTVFLLTSSAFFIMAKQYVG, WVPFILFGLAVVIYIPRVIWN, FLATILIFISMGFLDYFMGLG, and LFIALWWWYALLAILSIFDIF.

This sequence belongs to the pannexin family.

The protein localises to the cell membrane. Its subcellular location is the cell junction. It is found in the gap junction. In terms of biological role, structural component of the gap junctions. The sequence is that of Innexin-17 from Caenorhabditis elegans.